Consider the following 334-residue polypeptide: N-acetyl-gamma-glutamyl-phosphate reductase (334 aa).

Cysteine 154 is a catalytic residue.

This sequence belongs to the NAGSA dehydrogenase family. Type 1 subfamily.

The protein localises to the cytoplasm. The enzyme catalyses N-acetyl-L-glutamate 5-semialdehyde + phosphate + NADP(+) = N-acetyl-L-glutamyl 5-phosphate + NADPH + H(+). It participates in amino-acid biosynthesis; L-arginine biosynthesis; N(2)-acetyl-L-ornithine from L-glutamate: step 3/4. In terms of biological role, catalyzes the NADPH-dependent reduction of N-acetyl-5-glutamyl phosphate to yield N-acetyl-L-glutamate 5-semialdehyde. The chain is N-acetyl-gamma-glutamyl-phosphate reductase from Escherichia coli (strain K12).